The sequence spans 158 residues: Cyclic pyranopterin monophosphate synthase (158 aa).

Substrate is bound by residues 75–77 (LCH) and 113–114 (ME). Asp-128 is an active-site residue.

The protein belongs to the MoaC family. In terms of assembly, homohexamer; trimer of dimers.

The catalysed reaction is (8S)-3',8-cyclo-7,8-dihydroguanosine 5'-triphosphate = cyclic pyranopterin phosphate + diphosphate. Its pathway is cofactor biosynthesis; molybdopterin biosynthesis. Its function is as follows. Catalyzes the conversion of (8S)-3',8-cyclo-7,8-dihydroguanosine 5'-triphosphate to cyclic pyranopterin monophosphate (cPMP). This chain is Cyclic pyranopterin monophosphate synthase, found in Paraburkholderia xenovorans (strain LB400).